A 78-amino-acid polypeptide reads, in one-letter code: Acyl carrier protein (78 aa).

One can recognise a Carrier domain in the interval 4–78 (AQIKEKVYDI…QQAIDYIVKK (75 aa)). At serine 39 the chain carries O-(pantetheine 4'-phosphoryl)serine.

This sequence belongs to the acyl carrier protein (ACP) family. Post-translationally, 4'-phosphopantetheine is transferred from CoA to a specific serine of apo-ACP by AcpS. This modification is essential for activity because fatty acids are bound in thioester linkage to the sulfhydryl of the prosthetic group.

The protein localises to the cytoplasm. Its pathway is lipid metabolism; fatty acid biosynthesis. In terms of biological role, carrier of the growing fatty acid chain in fatty acid biosynthesis. In Chlorobium phaeobacteroides (strain DSM 266 / SMG 266 / 2430), this protein is Acyl carrier protein.